Reading from the N-terminus, the 145-residue chain is Selenoprotein M (145 aa).

Residues 1–23 (MSILLSPPSLLLLLAALVAPATS) form the signal peptide. Residues Cys-45 and Sec-48 each act as nucleophile in the active site. A cross-link (cysteinyl-selenocysteine (Cys-Sec)) is located at residues 45–48 (CGGU). Sec-48 is a non-standard amino acid (selenocysteine). The segment at 125–145 (PPEYLWAPAKPPEEASEHDDL) is disordered.

This sequence belongs to the selenoprotein M/F family. In terms of tissue distribution, widely expressed. Highly expressed in brain.

The protein resides in the cytoplasm. The protein localises to the perinuclear region. It localises to the endoplasmic reticulum. Its subcellular location is the golgi apparatus. In terms of biological role, may function as a thiol-disulfide oxidoreductase that participates in disulfide bond formation. The sequence is that of Selenoprotein M from Mus musculus (Mouse).